Reading from the N-terminus, the 372-residue chain is Bifunctional enzyme IspD/IspF (372 aa).

The tract at residues 1 to 210 is 2-C-methyl-D-erythritol 4-phosphate cytidylyltransferase; that stretch reads MLDLSLIMLG…LNLNSPSNDI (210 aa). The interval 211–372 is 2-C-methyl-D-erythritol 2,4-cyclodiphosphate synthase; it reads FCGNGFDVHA…LKYFNWRNVL (162 aa). A divalent metal cation-binding residues include aspartate 217 and histidine 219. 4-CDP-2-C-methyl-D-erythritol 2-phosphate-binding positions include 217-219 and 243-244; these read DVH and HS. Histidine 251 is a binding site for a divalent metal cation. 4-CDP-2-C-methyl-D-erythritol 2-phosphate-binding positions include 265–267, 270–274, 341–344, phenylalanine 348, and arginine 351; these read DIG, YPDND, and TTTE.

It in the N-terminal section; belongs to the IspD/TarI cytidylyltransferase family. IspD subfamily. In the C-terminal section; belongs to the IspF family. A divalent metal cation is required as a cofactor.

The enzyme catalyses 2-C-methyl-D-erythritol 4-phosphate + CTP + H(+) = 4-CDP-2-C-methyl-D-erythritol + diphosphate. The catalysed reaction is 4-CDP-2-C-methyl-D-erythritol 2-phosphate = 2-C-methyl-D-erythritol 2,4-cyclic diphosphate + CMP. It participates in isoprenoid biosynthesis; isopentenyl diphosphate biosynthesis via DXP pathway; isopentenyl diphosphate from 1-deoxy-D-xylulose 5-phosphate: step 2/6. Its pathway is isoprenoid biosynthesis; isopentenyl diphosphate biosynthesis via DXP pathway; isopentenyl diphosphate from 1-deoxy-D-xylulose 5-phosphate: step 4/6. Its function is as follows. Bifunctional enzyme that catalyzes the formation of 4-diphosphocytidyl-2-C-methyl-D-erythritol from CTP and 2-C-methyl-D-erythritol 4-phosphate (MEP) (IspD), and catalyzes the conversion of 4-diphosphocytidyl-2-C-methyl-D-erythritol 2-phosphate (CDP-ME2P) to 2-C-methyl-D-erythritol 2,4-cyclodiphosphate (ME-CPP) with a corresponding release of cytidine 5-monophosphate (CMP) (IspF). This chain is Bifunctional enzyme IspD/IspF, found in Campylobacter fetus subsp. fetus (strain 82-40).